Here is a 370-residue protein sequence, read N- to C-terminus: 3-isopropylmalate dehydrogenase (370 aa).

77–90 (GAKWDGVPYEARPE) is an NAD(+) binding site. 4 residues coordinate substrate: arginine 97, arginine 107, arginine 135, and aspartate 226. Mg(2+) is bound by residues aspartate 226, aspartate 250, and aspartate 254. An NAD(+)-binding site is contributed by 290–302 (GSAPDIAGKGLAN).

It belongs to the isocitrate and isopropylmalate dehydrogenases family. LeuB type 1 subfamily. In terms of assembly, homodimer. Requires Mg(2+) as cofactor. Mn(2+) is required as a cofactor.

The protein resides in the cytoplasm. It carries out the reaction (2R,3S)-3-isopropylmalate + NAD(+) = 4-methyl-2-oxopentanoate + CO2 + NADH. It functions in the pathway amino-acid biosynthesis; L-leucine biosynthesis; L-leucine from 3-methyl-2-oxobutanoate: step 3/4. In terms of biological role, catalyzes the oxidation of 3-carboxy-2-hydroxy-4-methylpentanoate (3-isopropylmalate) to 3-carboxy-4-methyl-2-oxopentanoate. The product decarboxylates to 4-methyl-2 oxopentanoate. This Rhodopseudomonas palustris (strain BisB18) protein is 3-isopropylmalate dehydrogenase.